A 521-amino-acid chain; its full sequence is Bifunctional purine biosynthesis protein PurH (521 aa).

An MGS-like domain is found at 1–147 (MAKITRALIS…KNNADVTVVV (147 aa)).

Belongs to the PurH family.

It catalyses the reaction (6R)-10-formyltetrahydrofolate + 5-amino-1-(5-phospho-beta-D-ribosyl)imidazole-4-carboxamide = 5-formamido-1-(5-phospho-D-ribosyl)imidazole-4-carboxamide + (6S)-5,6,7,8-tetrahydrofolate. The catalysed reaction is IMP + H2O = 5-formamido-1-(5-phospho-D-ribosyl)imidazole-4-carboxamide. Its pathway is purine metabolism; IMP biosynthesis via de novo pathway; 5-formamido-1-(5-phospho-D-ribosyl)imidazole-4-carboxamide from 5-amino-1-(5-phospho-D-ribosyl)imidazole-4-carboxamide (10-formyl THF route): step 1/1. It functions in the pathway purine metabolism; IMP biosynthesis via de novo pathway; IMP from 5-formamido-1-(5-phospho-D-ribosyl)imidazole-4-carboxamide: step 1/1. This Geotalea uraniireducens (strain Rf4) (Geobacter uraniireducens) protein is Bifunctional purine biosynthesis protein PurH.